The following is a 160-amino-acid chain: DNA polymerase delta subunit 4 (160 aa).

Residues 1–48 (MKKRTTQAKKSGQNTNIRDVFPHVVRSNSSQSHIGKKVSSEQSPTPDV) form a disordered region. The segment covering 8-17 (AKKSGQNTNI) has biased composition (polar residues).

This sequence belongs to the DNA polymerase delta subunit 4 family. In terms of assembly, heterotetramer that consist of the pol3, cdc1, cdc27 and cdm1 subunits. Interacts with cdc1 and pol3.

It localises to the nucleus. Its function is as follows. Appears to have a role in the stabilization of the DNA polymerase delta complex. This is DNA polymerase delta subunit 4 (cdm1) from Schizosaccharomyces pombe (strain 972 / ATCC 24843) (Fission yeast).